The following is a 97-amino-acid chain: Citrate lyase acyl carrier protein 2 (97 aa).

S14 is subject to O-(phosphoribosyl dephospho-coenzyme A)serine.

Belongs to the CitD family. Oligomer with a subunit composition of (alpha,beta,gamma)6.

It localises to the cytoplasm. Its function is as follows. Covalent carrier of the coenzyme of citrate lyase. In Salmonella paratyphi A (strain ATCC 9150 / SARB42), this protein is Citrate lyase acyl carrier protein 2.